The following is a 374-amino-acid chain: Chaperone protein DnaJ (374 aa).

The J domain occupies 4-69 (SYYEILEITQ…EKRAIYDRYG (66 aa)). The segment at 136-213 (GCKKNIDFTY…CKGLGYNESK (78 aa)) adopts a CR-type zinc-finger fold. Zn(2+) is bound by residues Cys149, Cys152, Cys165, Cys168, Cys187, Cys190, Cys201, and Cys204. CXXCXGXG motif repeat units follow at residues 149-156 (CKTCNGTG), 165-172 (CPKCQGRG), 187-194 (CPDCQGSG), and 201-208 (CNDCKGLG).

Belongs to the DnaJ family. As to quaternary structure, homodimer. The cofactor is Zn(2+).

It localises to the cytoplasm. Its function is as follows. Participates actively in the response to hyperosmotic and heat shock by preventing the aggregation of stress-denatured proteins and by disaggregating proteins, also in an autonomous, DnaK-independent fashion. Unfolded proteins bind initially to DnaJ; upon interaction with the DnaJ-bound protein, DnaK hydrolyzes its bound ATP, resulting in the formation of a stable complex. GrpE releases ADP from DnaK; ATP binding to DnaK triggers the release of the substrate protein, thus completing the reaction cycle. Several rounds of ATP-dependent interactions between DnaJ, DnaK and GrpE are required for fully efficient folding. Also involved, together with DnaK and GrpE, in the DNA replication of plasmids through activation of initiation proteins. The sequence is that of Chaperone protein DnaJ from Campylobacter jejuni subsp. doylei (strain ATCC BAA-1458 / RM4099 / 269.97).